Here is a 56-residue protein sequence, read N- to C-terminus: Small ribosomal subunit protein uS14 (56 aa).

4 residues coordinate Zn(2+): Cys-21, Cys-24, Cys-39, and Cys-42.

It belongs to the universal ribosomal protein uS14 family. Component of the small ribosomal subunit. Mature ribosomes consist of a small (40S) and a large (60S) subunit. The 40S subunit contains about 32 different proteins and 1 molecule of RNA (18S). The 60S subunit contains 45 different proteins and 3 molecules of RNA (25S, 5.8S and 5S). Zn(2+) is required as a cofactor.

It is found in the cytoplasm. Component of the ribosome, a large ribonucleoprotein complex responsible for the synthesis of proteins in the cell. The small ribosomal subunit (SSU) binds messenger RNAs (mRNAs) and translates the encoded message by selecting cognate aminoacyl-transfer RNA (tRNA) molecules. The large subunit (LSU) contains the ribosomal catalytic site termed the peptidyl transferase center (PTC), which catalyzes the formation of peptide bonds, thereby polymerizing the amino acids delivered by tRNAs into a polypeptide chain. The nascent polypeptides leave the ribosome through a tunnel in the LSU and interact with protein factors that function in enzymatic processing, targeting, and the membrane insertion of nascent chains at the exit of the ribosomal tunnel. This chain is Small ribosomal subunit protein uS14, found in Candida albicans (strain SC5314 / ATCC MYA-2876) (Yeast).